Consider the following 153-residue polypeptide: 6,7-dimethyl-8-ribityllumazine synthase (153 aa).

Residues phenylalanine 22, 56 to 58 (AFE), and 80 to 82 (TVI) contribute to the 5-amino-6-(D-ribitylamino)uracil site. Position 85–86 (85–86 (AT)) interacts with (2S)-2-hydroxy-3-oxobutyl phosphate. The active-site Proton donor is the histidine 88. Residue phenylalanine 113 coordinates 5-amino-6-(D-ribitylamino)uracil. Arginine 127 contributes to the (2S)-2-hydroxy-3-oxobutyl phosphate binding site.

This sequence belongs to the DMRL synthase family.

It carries out the reaction (2S)-2-hydroxy-3-oxobutyl phosphate + 5-amino-6-(D-ribitylamino)uracil = 6,7-dimethyl-8-(1-D-ribityl)lumazine + phosphate + 2 H2O + H(+). It functions in the pathway cofactor biosynthesis; riboflavin biosynthesis; riboflavin from 2-hydroxy-3-oxobutyl phosphate and 5-amino-6-(D-ribitylamino)uracil: step 1/2. Functionally, catalyzes the formation of 6,7-dimethyl-8-ribityllumazine by condensation of 5-amino-6-(D-ribitylamino)uracil with 3,4-dihydroxy-2-butanone 4-phosphate. This is the penultimate step in the biosynthesis of riboflavin. In Clostridium perfringens (strain 13 / Type A), this protein is 6,7-dimethyl-8-ribityllumazine synthase.